Here is a 1072-residue protein sequence, read N- to C-terminus: Teashirt homolog 3 (1072 aa).

Disordered regions lie at residues 44–71 (ACPS…SETS), 130–153 (PSSE…CGSG), and 228–247 (HYRD…WSKP). A compositionally biased stretch (basic and acidic residues) spans 57-71 (SSHEMDSESHISETS). 2 consecutive C2H2-type zinc fingers follow at residues 204–228 (FRCK…ETGH) and 265–289 (LKCM…KTKH). Residues 228–237 (HYRDDNHETD) are compositionally biased toward basic and acidic residues. The disordered stretch occupies residues 315-336 (SLELELPSSPDSTGGTPKATLS). The C2H2-type 3; atypical zinc-finger motif lies at 376–400 (LKCMECGSSHDTLQELTAHMMVTGH). The span at 469–481 (AVLDEKPKEKEKA) shows a compositional bias: basic and acidic residues. 5 disordered regions span residues 469-489 (AVLD…EKYD), 569-594 (NSEI…PMPK), 616-690 (EKMK…PLSG), 784-815 (TKGK…TVTT), and 846-888 (TESH…RQSN). 2 stretches are compositionally biased toward polar residues: residues 571–593 (EIVS…SPMP) and 649–660 (SSGSGFKSQENS). Position 672 is a phosphoserine (S672). Composition is skewed to low complexity over residues 791 to 815 (GCSL…TVTT) and 847 to 860 (ESHT…SSIS). The segment at residues 882–952 (RKGRQSNWNP…NVKYQLRRTG (71 aa)) is a DNA-binding region (homeobox; atypical). C2H2-type zinc fingers lie at residues 967–989 (FFCN…LESH) and 1032–1055 (YQCK…SKTH).

It belongs to the teashirt C2H2-type zinc-finger protein family. In terms of assembly, interacts (via N-terminus) with HDAC1 and HDAC2; the interaction is direct. Found in a trimeric complex with APBB1 and HDAC1; the interaction between HDAC1 and APBB1 is mediated by TSHZ3. Interacts (via homeobox domain) with APBB1 (via PID domain 1). As to expression, expressed in cortical neurons.

The protein resides in the nucleus. The protein localises to the cell projection. It localises to the growth cone. Transcriptional regulator involved in developmental processes. Functions in association with APBB1, SET and HDAC factors as a transcriptional repressor, that inhibits the expression of CASP4. TSHZ3-mediated transcription repression involves the recruitment of histone deacetylases HDAC1 and HDAC2. Associates with chromatin in a region surrounding the CASP4 transcriptional start site(s). Regulates the development of neurons involved in both respiratory rhythm and airflow control. Promotes maintenance of nucleus ambiguus (nA) motoneurons, which govern upper airway function, and establishes a respiratory rhythm generator (RRG) activity compatible with survival at birth. Involved in the differentiation of the proximal uretic smooth muscle cells during developmental processes. Involved in the up-regulation of myocardin, that directs the expression of smooth muscle cells in the proximal ureter. Involved in the modulation of glutamatergic synaptic transmission and long-term synaptic potentiation. The protein is Teashirt homolog 3 (Tshz3) of Rattus norvegicus (Rat).